The sequence spans 232 residues: MSMPQAILTDIEGTTSSLSFVKDVLFPYARRALPDFVREHREHPDVMPWLDQVANETGTAFSEEALVATLQTWIDTDSKHTALKALQGMIWASGYQNGDFTAHLYPDAVQRLRAWHAANVPLYVYSSGSVPAQQLFFRHSHAGDLSGLFSGWFDTEIGGKRESTSYQRIAEHIGIAPAGIVFLSDVIEELNAAAQIGLNTVLIDRRDDYPTPRHLKDADHHLHLDSFAQLPF.

Belongs to the HAD-like hydrolase superfamily. MasA/MtnC family. In terms of assembly, monomer. It depends on Mg(2+) as a cofactor.

It carries out the reaction 5-methylsulfanyl-2,3-dioxopentyl phosphate + H2O = 1,2-dihydroxy-5-(methylsulfanyl)pent-1-en-3-one + phosphate. It functions in the pathway amino-acid biosynthesis; L-methionine biosynthesis via salvage pathway; L-methionine from S-methyl-5-thio-alpha-D-ribose 1-phosphate: step 3/6. The protein operates within amino-acid biosynthesis; L-methionine biosynthesis via salvage pathway; L-methionine from S-methyl-5-thio-alpha-D-ribose 1-phosphate: step 4/6. Bifunctional enzyme that catalyzes the enolization of 2,3-diketo-5-methylthiopentyl-1-phosphate (DK-MTP-1-P) into the intermediate 2-hydroxy-3-keto-5-methylthiopentenyl-1-phosphate (HK-MTPenyl-1-P), which is then dephosphorylated to form the acireductone 1,2-dihydroxy-3-keto-5-methylthiopentene (DHK-MTPene). This is Enolase-phosphatase E1 from Xylella fastidiosa (strain 9a5c).